The following is a 359-amino-acid chain: Phosphoribosylformylglycinamidine cyclo-ligase (359 aa).

This sequence belongs to the AIR synthase family.

It localises to the cytoplasm. The enzyme catalyses 2-formamido-N(1)-(5-O-phospho-beta-D-ribosyl)acetamidine + ATP = 5-amino-1-(5-phospho-beta-D-ribosyl)imidazole + ADP + phosphate + H(+). It participates in purine metabolism; IMP biosynthesis via de novo pathway; 5-amino-1-(5-phospho-D-ribosyl)imidazole from N(2)-formyl-N(1)-(5-phospho-D-ribosyl)glycinamide: step 2/2. The sequence is that of Phosphoribosylformylglycinamidine cyclo-ligase from Brucella canis (strain ATCC 23365 / NCTC 10854 / RM-666).